The chain runs to 172 residues: Adenine phosphoribosyltransferase (172 aa).

Belongs to the purine/pyrimidine phosphoribosyltransferase family. In terms of assembly, homodimer.

The protein resides in the cytoplasm. It catalyses the reaction AMP + diphosphate = 5-phospho-alpha-D-ribose 1-diphosphate + adenine. The protein operates within purine metabolism; AMP biosynthesis via salvage pathway; AMP from adenine: step 1/1. Functionally, catalyzes a salvage reaction resulting in the formation of AMP, that is energically less costly than de novo synthesis. The chain is Adenine phosphoribosyltransferase from Prochlorococcus marinus (strain MIT 9313).